Consider the following 355-residue polypeptide: Guanine nucleotide-binding protein alpha-2 subunit (355 aa).

The segment at 1 to 20 is disordered; it reads MCFGGRGKDDEAEASRSREL. A G-alpha domain is found at 33-355; it reads KEVKLLLLGA…IQRNLKQLIL (323 aa). A G1 motif region spans residues 36–49; sequence KLLLLGAGESGKST. 14 residues coordinate GTP: glutamate 44, serine 45, glycine 46, lysine 47, serine 48, threonine 49, aspartate 151, leucine 176, threonine 182, glycine 204, asparagine 270, lysine 271, aspartate 273, and alanine 328. Serine 48 is a Mg(2+) binding site. The tract at residues 174-182 is G2 motif; it reads DLLRSRLRT. Threonine 182 is a binding site for Mg(2+). Positions 197 to 206 are G3 motif; that stretch reads YRMFDVGGQR. The interval 266–273 is G4 motif; that stretch reads ILFLNKID. The G5 motif stretch occupies residues 326–331; the sequence is TNATDT.

This sequence belongs to the G-alpha family. G(q) subfamily. G proteins are composed of 3 units; alpha, beta and gamma. The alpha chain contains the guanine nucleotide binding site. Mg(2+) is required as a cofactor.

Guanine nucleotide-binding proteins (G proteins) are involved as modulators or transducers in various transmembrane signaling systems. The sequence is that of Guanine nucleotide-binding protein alpha-2 subunit (gna-2) from Neurospora crassa (strain ATCC 24698 / 74-OR23-1A / CBS 708.71 / DSM 1257 / FGSC 987).